We begin with the raw amino-acid sequence, 449 residues long: C4-dicarboxylate transport protein 1 (449 aa).

The next 8 helical transmembrane spans lie at 16–38, 53–71, 84–106, 157–176, 197–219, 229–251, 311–333, and 358–380; these read FLQVVIGLVIGVICGVGIPDLAV, MLIALIVFCVVVNGISGAG, VIYFEILTTIALVLGLVVAYSLG, ILQVLLFSVLFGSALNLVGE, GMIVRLAPLGVFGAVAFTTARYG, LVLVFYATCLVFVMAVLGSVLRL, GFSIYLTLAVVFIAHVTGTPLAM, and LVILAATLTAVPAIPVAGLVLVL.

Belongs to the dicarboxylate/amino acid:cation symporter (DAACS) (TC 2.A.23) family.

Its subcellular location is the cell inner membrane. Its function is as follows. Responsible for the transport of dicarboxylates such as succinate, fumarate, and malate from the periplasm across the membrane. This is C4-dicarboxylate transport protein 1 (dctA1) from Pseudomonas aeruginosa (strain ATCC 15692 / DSM 22644 / CIP 104116 / JCM 14847 / LMG 12228 / 1C / PRS 101 / PAO1).